We begin with the raw amino-acid sequence, 350 residues long: L-threonine 3-dehydrogenase (350 aa).

C42 is a Zn(2+) binding site. Active-site charge relay system residues include T44 and H47. Residues H67, E68, C97, C100, C103, and C111 each coordinate Zn(2+). NAD(+) contacts are provided by residues L179, E199, R204, 266–268 (LGL), and 291–292 (IT).

It belongs to the zinc-containing alcohol dehydrogenase family. In terms of assembly, homotetramer. It depends on Zn(2+) as a cofactor.

Its subcellular location is the cytoplasm. It catalyses the reaction L-threonine + NAD(+) = (2S)-2-amino-3-oxobutanoate + NADH + H(+). Its pathway is amino-acid degradation; L-threonine degradation via oxydo-reductase pathway; glycine from L-threonine: step 1/2. Functionally, catalyzes the NAD(+)-dependent oxidation of L-threonine to 2-amino-3-ketobutyrate. To a lesser extent, also catalyzes the oxidation of L-serine. The protein is L-threonine 3-dehydrogenase of Thermococcus kodakarensis (strain ATCC BAA-918 / JCM 12380 / KOD1) (Pyrococcus kodakaraensis (strain KOD1)).